The sequence spans 213 residues: Large ribosomal subunit protein uL1 (213 aa).

The protein belongs to the universal ribosomal protein uL1 family. Part of the 50S ribosomal subunit.

Functionally, probably involved in E site tRNA release. Binds directly to 23S rRNA. Protein L1 is also a translational repressor protein, it controls the translation of the L1 operon by binding to its mRNA. Thus it also controls transcription of L10 and L12 by translational coupling. Unlike the case in E.coli, where the site is in the untranslated mRNA leader, this site is within the L1 protein's structural gene. The sequence is that of Large ribosomal subunit protein uL1 from Methanococcus vannielii (strain ATCC 35089 / DSM 1224 / JCM 13029 / OCM 148 / SB).